A 786-amino-acid polypeptide reads, in one-letter code: Endonuclease MutS2 (786 aa).

332-339 (GPNTGGKT) contributes to the ATP binding site. A Smr domain is found at 711–786 (IDLRGMDSEE…GTGVTVVILK (76 aa)).

It belongs to the DNA mismatch repair MutS family. MutS2 subfamily. In terms of assembly, homodimer. Binds to stalled ribosomes, contacting rRNA.

Its function is as follows. Endonuclease that is involved in the suppression of homologous recombination and thus may have a key role in the control of bacterial genetic diversity. Functionally, acts as a ribosome collision sensor, splitting the ribosome into its 2 subunits. Detects stalled/collided 70S ribosomes which it binds and splits by an ATP-hydrolysis driven conformational change. Acts upstream of the ribosome quality control system (RQC), a ribosome-associated complex that mediates the extraction of incompletely synthesized nascent chains from stalled ribosomes and their subsequent degradation. Probably generates substrates for RQC. This is Endonuclease MutS2 from Clostridium perfringens (strain ATCC 13124 / DSM 756 / JCM 1290 / NCIMB 6125 / NCTC 8237 / Type A).